A 293-amino-acid polypeptide reads, in one-letter code: Homoserine kinase (293 aa).

83 to 93 (PITRGMGSSSA) serves as a coordination point for ATP.

The protein belongs to the GHMP kinase family. Homoserine kinase subfamily.

It localises to the cytoplasm. It catalyses the reaction L-homoserine + ATP = O-phospho-L-homoserine + ADP + H(+). Its pathway is amino-acid biosynthesis; L-threonine biosynthesis; L-threonine from L-aspartate: step 4/5. Its function is as follows. Catalyzes the ATP-dependent phosphorylation of L-homoserine to L-homoserine phosphate. The protein is Homoserine kinase of Helicobacter pylori (strain J99 / ATCC 700824) (Campylobacter pylori J99).